The sequence spans 344 residues: Serpentine receptor class delta-3 (344 aa).

Transmembrane regions (helical) follow at residues 21 to 41 (IIGY…IILI), 54 to 74 (MLHL…MLAL), 102 to 122 (FLHV…MISF), 142 to 162 (ICIL…SDVA), 203 to 223 (FSAI…IVFF), 259 to 279 (IVPI…FQVV), and 287 to 307 (MPFR…LYFV).

This sequence belongs to the nematode receptor-like protein srd family.

The protein resides in the membrane. The protein is Serpentine receptor class delta-3 (srd-3) of Caenorhabditis elegans.